Here is a 285-residue protein sequence, read N- to C-terminus: 4-hydroxybenzoate octaprenyltransferase (285 aa).

Transmembrane regions (helical) follow at residues 20–37 (IGIYLVLWPALWALWLAA), 96–116 (FFFVLCLLAFGLVLFLNPFTI), 138–158 (WPQAFLGAAFAWAIPMAFAAI), 166–186 (AWVIFGVTLVWALVYDTAYAV), 211–231 (IIGFFQAIMLLGFLWIGDLFG), 234–254 (WLYYGSVLIAAGFFVYHQYLL), and 262–282 (AFKAFLNNHWVGLVILIGIML).

This sequence belongs to the UbiA prenyltransferase family. Mg(2+) is required as a cofactor.

Its subcellular location is the cell inner membrane. It catalyses the reaction all-trans-octaprenyl diphosphate + 4-hydroxybenzoate = 4-hydroxy-3-(all-trans-octaprenyl)benzoate + diphosphate. It functions in the pathway cofactor biosynthesis; ubiquinone biosynthesis. Functionally, catalyzes the prenylation of para-hydroxybenzoate (PHB) with an all-trans polyprenyl group. Mediates the second step in the final reaction sequence of ubiquinone-8 (UQ-8) biosynthesis, which is the condensation of the polyisoprenoid side chain with PHB, generating the first membrane-bound Q intermediate 3-octaprenyl-4-hydroxybenzoate. This chain is 4-hydroxybenzoate octaprenyltransferase, found in Hydrogenovibrio crunogenus (strain DSM 25203 / XCL-2) (Thiomicrospira crunogena).